We begin with the raw amino-acid sequence, 243 residues long: DNA repair protein RecO (243 aa).

The protein belongs to the RecO family.

Involved in DNA repair and RecF pathway recombination. In Frankia casuarinae (strain DSM 45818 / CECT 9043 / HFP020203 / CcI3), this protein is DNA repair protein RecO.